A 336-amino-acid chain; its full sequence is DNA-directed RNA polymerase subunit alpha (336 aa).

The segment at 1-226 is alpha N-terminal domain (alpha-NTD); the sequence is MLIAQRPTLS…ELFGLARELN (226 aa). An alpha C-terminal domain (alpha-CTD) region spans residues 243–336; that stretch reads LAADMALPIE…SDDAFGDDEL (94 aa).

It belongs to the RNA polymerase alpha chain family. As to quaternary structure, homodimer. The RNAP catalytic core consists of 2 alpha, 1 beta, 1 beta' and 1 omega subunit. When a sigma factor is associated with the core the holoenzyme is formed, which can initiate transcription.

It carries out the reaction RNA(n) + a ribonucleoside 5'-triphosphate = RNA(n+1) + diphosphate. In terms of biological role, DNA-dependent RNA polymerase catalyzes the transcription of DNA into RNA using the four ribonucleoside triphosphates as substrates. This Renibacterium salmoninarum (strain ATCC 33209 / DSM 20767 / JCM 11484 / NBRC 15589 / NCIMB 2235) protein is DNA-directed RNA polymerase subunit alpha.